The following is a 1331-amino-acid chain: Probable serine/threonine-protein kinase DDB_G0272254 (1331 aa).

Composition is skewed to low complexity over residues Met-1–Ser-42, Asn-96–Asn-116, and Thr-153–Ser-175. 3 disordered regions span residues Met-1–Ala-43, Asp-92–Ser-132, and Ile-150–Ser-175. Transmembrane regions (helical) follow at residues Phe-201–Leu-221 and Phe-224–Tyr-244. A compositionally biased stretch (low complexity) spans Ser-259 to Lys-287. 4 disordered regions span residues Ser-259–Tyr-300, Asn-320–Glu-419, Ser-435–Ile-464, and Ala-512–Asn-581. A compositionally biased stretch (polar residues) spans Gly-288–Thr-299. A compositionally biased stretch (polar residues) spans Val-436–Ile-450. Positions Ser-514–Asn-531 are enriched in low complexity. Polar residues predominate over residues Gln-532–Val-555. The span at Asn-557–Ser-577 shows a compositional bias: low complexity. Kelch repeat units lie at residues Ser-665–Tyr-710, Lys-716–Asn-769, Arg-770–Ser-816, Lys-822–Asp-868, Asn-909–Asn-959, and Lys-962–Asn-1008. The span at Asn-834 to Asn-860 shows a compositional bias: low complexity. A disordered region spans residues Asn-834–Gly-862. The tract at residues Asn-976–Asn-1042 is disordered. A Protein kinase domain is found at Ile-1073–Phe-1331. ATP-binding positions include Ile-1079–Val-1087 and Lys-1100. The active-site Proton acceptor is the Asp-1200.

This sequence belongs to the protein kinase superfamily. TKL Ser/Thr protein kinase family.

The protein localises to the membrane. It catalyses the reaction L-seryl-[protein] + ATP = O-phospho-L-seryl-[protein] + ADP + H(+). It carries out the reaction L-threonyl-[protein] + ATP = O-phospho-L-threonyl-[protein] + ADP + H(+). In Dictyostelium discoideum (Social amoeba), this protein is Probable serine/threonine-protein kinase DDB_G0272254.